Consider the following 2300-residue polypeptide: Protein hobbit (2300 aa).

An N-terminal signal peptide occupies residues M1–P21. Positions G23 to K117 are transmembrane domain. Disordered regions lie at residues T269–D290 and V2111–G2148. Residues S270–L282 show a composition bias toward polar residues. A required for endoplasmic reticulum-cell membrane contact sites location and binding to phosphatidylinositols region spans residues V1750–D2300. A compositionally biased stretch (low complexity) spans A2119–K2140.

The protein localises to the cell membrane. It is found in the endoplasmic reticulum membrane. It localises to the mitochondrion membrane. In terms of biological role, tube-forming lipid transport protein which binds to phosphatidylinositols and affects phosphatidylinositol-4,5-bisphosphate (PtdIns-4,5-P2) distribution. The sequence is that of Protein hobbit from Drosophila melanogaster (Fruit fly).